A 532-amino-acid chain; its full sequence is tRNA-2-methylthio-N(6)-dimethylallyladenosine synthase 2 (532 aa).

The tract at residues 1 to 21 (MTSTVAHGAGSAGPADDAEPM) is disordered. Residues 24 to 140 (RTYQVRTYGC…LPALLDRARH (117 aa)) form the MTTase N-terminal domain. C33, C69, C103, C177, C181, and C184 together coordinate [4Fe-4S] cluster. A Radical SAM core domain is found at 163–399 (RESAYAAWVS…VELQEQISLE (237 aa)). In terms of domain architecture, TRAM spans 402–470 (RAIVGQRVEL…PHHLIADGGI (69 aa)). The interval 510–532 (TSCGSAGGCGSADGAGSSAGDPQ) is disordered. A compositionally biased stretch (low complexity) spans 523-532 (GAGSSAGDPQ).

It belongs to the methylthiotransferase family. MiaB subfamily. As to quaternary structure, monomer. [4Fe-4S] cluster serves as cofactor.

It localises to the cytoplasm. It carries out the reaction N(6)-dimethylallyladenosine(37) in tRNA + (sulfur carrier)-SH + AH2 + 2 S-adenosyl-L-methionine = 2-methylsulfanyl-N(6)-dimethylallyladenosine(37) in tRNA + (sulfur carrier)-H + 5'-deoxyadenosine + L-methionine + A + S-adenosyl-L-homocysteine + 2 H(+). In terms of biological role, catalyzes the methylthiolation of N6-(dimethylallyl)adenosine (i(6)A), leading to the formation of 2-methylthio-N6-(dimethylallyl)adenosine (ms(2)i(6)A) at position 37 in tRNAs that read codons beginning with uridine. The polypeptide is tRNA-2-methylthio-N(6)-dimethylallyladenosine synthase 2 (Mycobacterium marinum (strain ATCC BAA-535 / M)).